Here is an 896-residue protein sequence, read N- to C-terminus: Phycobiliprotein ApcE (896 aa).

Cys-190 is a binding site for (2R,3E)-phycocyanobilin. PBS-linker domains are found at residues 247–427 (DIQG…FRKV), 508–684 (LGAK…QRVD), and 703–881 (EPEI…KQDK).

Belongs to the phycobilisome linker protein family. In terms of assembly, heterodimer of ApcF (a variant beta-allophycocyanin). Phycobilisomes of this organism are composed of a two cylinder core, from which six rods radiate. The core is mainly composed of allophycocyanin alpha and beta chains and of minor components. Post-translationally, contains one covalently linked bilin chromophore. This protein autochromophorylates.

The protein localises to the cellular thylakoid membrane. In terms of biological role, this protein is postulated to act both as terminal energy acceptor (by its phycobilin-like domains) and as a linker polypeptide (by its repeats and arms) that stabilizes the phycobilisome core architecture. Has intrinsic bilin lyase activity. In Synechocystis sp. (strain ATCC 27184 / PCC 6803 / Kazusa), this protein is Phycobiliprotein ApcE (apcE).